The chain runs to 796 residues: Cadherin-11 (796 aa).

The signal sequence occupies residues Met1–Ala22. A propeptide spanning residues Phe23–Arg53 is cleaved from the precursor. Cadherin domains are found at residues Gly54 to Phe159, Leu160 to Phe268, Pro269 to Phe383, Leu384 to Pro486, and Lys487 to Asn612. Over Gly54 to Thr617 the chain is Extracellular. N-linked (GlcNAc...) asparagine glycosylation is found at Asn455 and Asn540. A helical membrane pass occupies residues Gly618–Leu640. Over Arg641–Ser796 the chain is Cytoplasmic. Ser788 is modified (phosphoserine). Position 791 is a phosphothreonine (Thr791).

As to quaternary structure, interacts with PCDH8. As to expression, expressed mainly in brain but also found in other tissues. Expressed in neuroblasts. In the embryo from 67 to 72 days of gestation, detected at high levels in facial mesenchyme including the central palatal mesenchyme, dental mesenchyme, the eye and optic muscle, and the tongue (at protein level).

Its subcellular location is the cell membrane. In terms of biological role, cadherins are calcium-dependent cell adhesion proteins. They preferentially interact with themselves in a homophilic manner in connecting cells; cadherins may thus contribute to the sorting of heterogeneous cell types. Required for proper focal adhesion assembly. Involved in the regulation of cell migration. The sequence is that of Cadherin-11 (CDH11) from Homo sapiens (Human).